Consider the following 335-residue polypeptide: MLFKEKIPGLILCFIIAIPSWLLGLYLPLIGAPVFAILIGIIVGSFYQNRQLFNKGIAFTSKYILQTAVVLLGFGLNLMQVMKVGISSLPIIIMTISISLIIAYVLQKLFKLDKTIATLIGVGSSICGGSAIAATAPVINAKDDEVAQAISVIFLFNILAALIFPTLGNFIGLSDHGFALFAGTAVNDTSSVTATATAWDAINHSNTLGGATIVKLTRTLAIIPITIVLSIYHMKQTQKEQSVSVTKIFPKFVLYFILASLLTTIVASLGFSLRIFEPLKVLSKFFIVMAMGAIGINTNVSKLIKTGGKSILLGAACWLGIIIVSLTMQAILGTW.

9 consecutive transmembrane segments (helical) span residues 20–42, 57–79, 84–106, 116–138, 151–173, 210–232, 253–275, 285–304, and 311–333; these read SWLL…IGII, IAFT…LNLM, VGIS…AYVL, IATL…TAPV, SVIF…FIGL, GATI…LSIY, VLYF…SLRI, FFIV…SKLI, and ILLG…AILG.

It belongs to the UPF0324 family.

It localises to the cell membrane. This is UPF0324 membrane protein gbs1193 from Streptococcus agalactiae serotype III (strain NEM316).